The sequence spans 316 residues: Phosducin-like protein 1 (316 aa).

Residues 1–61 (MEQNILNSIL…EDGDKEYEVD (61 aa)) are disordered. A compositionally biased stretch (basic and acidic residues) spans 12-41 (KFGDGDQERSDIRHNDSGDENDNHSDHEGN). Acidic residues predominate over residues 49–61 (EGNEDGDKEYEVD). Positions 95–290 (SDYAEHREKQ…LLSSYDIIPN (196 aa)) constitute a Phosducin domain. Residues 102-156 (EKQKQKYLQKKYETQKMLEKMCFTTRDQPPPTEEENQLDSDDDDLERIRKARMEQ) are a coiled coil. A thioredoxin fold region spans residues 175–316 (FGYFKQIDSS…RPESDDDNDD (142 aa)). Residues 293–316 (KAKNSNWETSLSRKRPESDDDNDD) form a disordered region.

The protein belongs to the phosducin family.

The protein resides in the cytoplasm. In terms of biological role, required for normal chemotaxis in response to cAMP and folate. Required for the heterodimerization of the G protein beta and gamma subunits gpbA and gpgA, which is itself thought to be necessary for prenylation of the gamma subunit gpgA and its association with plasma membranes. The chain is Phosducin-like protein 1 (phlp1) from Dictyostelium discoideum (Social amoeba).